We begin with the raw amino-acid sequence, 309 residues long: Glutaminase (309 aa).

Substrate contacts are provided by Ser-65, Asn-117, Glu-162, Asn-169, Tyr-193, Tyr-245, and Val-263.

The protein belongs to the glutaminase family. In terms of assembly, homotetramer.

It carries out the reaction L-glutamine + H2O = L-glutamate + NH4(+). This chain is Glutaminase, found in Clostridioides difficile (strain 630) (Peptoclostridium difficile).